The chain runs to 372 residues: Chaperone protein DnaJ (372 aa).

The J domain maps to 5–69 (DYYEVLGVSK…DKRKQYDQFG (65 aa)). The segment at 139-221 (GVDKIIELDL…CKGKGKYLER (83 aa)) adopts a CR-type zinc-finger fold. Residues Cys152, Cys155, Cys169, Cys172, Cys195, Cys198, Cys209, and Cys212 each coordinate Zn(2+). 4 CXXCXGXG motif repeats span residues 152–159 (CSVCFGSG), 169–176 (CNNCHGTG), 195–202 (CNVCNGAG), and 209–216 (CKNCKGKG).

This sequence belongs to the DnaJ family. Homodimer. It depends on Zn(2+) as a cofactor.

It localises to the cytoplasm. In terms of biological role, participates actively in the response to hyperosmotic and heat shock by preventing the aggregation of stress-denatured proteins and by disaggregating proteins, also in an autonomous, DnaK-independent fashion. Unfolded proteins bind initially to DnaJ; upon interaction with the DnaJ-bound protein, DnaK hydrolyzes its bound ATP, resulting in the formation of a stable complex. GrpE releases ADP from DnaK; ATP binding to DnaK triggers the release of the substrate protein, thus completing the reaction cycle. Several rounds of ATP-dependent interactions between DnaJ, DnaK and GrpE are required for fully efficient folding. Also involved, together with DnaK and GrpE, in the DNA replication of plasmids through activation of initiation proteins. This chain is Chaperone protein DnaJ, found in Mycoplasma mycoides subsp. mycoides SC (strain CCUG 32753 / NCTC 10114 / PG1).